A 508-amino-acid polypeptide reads, in one-letter code: Glycerol kinase (508 aa).

Position 14 (threonine 14) interacts with ADP. The ATP site is built by threonine 14, threonine 15, and serine 16. Threonine 14 lines the sn-glycerol 3-phosphate pocket. Arginine 18 provides a ligand contact to ADP. Residues arginine 84, glutamate 85, and tyrosine 136 each coordinate sn-glycerol 3-phosphate. Arginine 84, glutamate 85, and tyrosine 136 together coordinate glycerol. Phosphohistidine; by HPr is present on histidine 232. Aspartate 246 serves as a coordination point for sn-glycerol 3-phosphate. Glycerol is bound by residues aspartate 246 and glutamine 247. Residues threonine 268 and glycine 311 each contribute to the ADP site. ATP is bound by residues threonine 268, glycine 311, glutamine 315, and glycine 412. ADP is bound by residues glycine 412 and asparagine 416.

This sequence belongs to the FGGY kinase family. Homotetramer and homodimer (in equilibrium). In terms of processing, the phosphoenolpyruvate-dependent sugar phosphotransferase system (PTS), including enzyme I, and histidine-containing protein (HPr) are required for the phosphorylation, which leads to the activation of the enzyme.

The catalysed reaction is glycerol + ATP = sn-glycerol 3-phosphate + ADP + H(+). It functions in the pathway polyol metabolism; glycerol degradation via glycerol kinase pathway; sn-glycerol 3-phosphate from glycerol: step 1/1. With respect to regulation, activated by phosphorylation and inhibited by fructose 1,6-bisphosphate (FBP). Functionally, key enzyme in the regulation of glycerol uptake and metabolism. Catalyzes the phosphorylation of glycerol to yield sn-glycerol 3-phosphate. The protein is Glycerol kinase of Streptococcus pyogenes serotype M18 (strain MGAS8232).